A 1071-amino-acid polypeptide reads, in one-letter code: Nonribosomal peptide synthetase flvI (1071 aa).

An adenylation region spans residues 33-417 (RRVLEQHDAP…GSLHFISRKD (385 aa)). The 77-residue stretch at 552–628 (MPLTEIELKM…MLCQNIKTDV (77 aa)) folds into the Carrier domain. An O-(pantetheine 4'-phosphoryl)serine modification is found at S589. Residues 689–961 (NYTLRLEFKL…IDDRDIEQLS (273 aa)) form a condensation region.

It belongs to the NRP synthetase family.

The catalysed reaction is (2S)-5,5-dimethylpiperidine-2-carboxylate + 10-hydroxy-pre-flavunoidine + ATP = flavunoidine + AMP + diphosphate + H(+). Its pathway is secondary metabolite biosynthesis; terpenoid biosynthesis. In terms of biological role, nonribosomal peptide synthetase; part of the gene cluster that mediates the biosynthesis of flavunoidine, an alkaloidal terpenoid with a tetracyclic cage-like core connected to dimethylcadaverine via a C-N bond and acylated with 5,5-dimethyl-L-pipecolate. The tetracyclic core is synthesized by the terpene cyclase flvE and the cytochrome P450 monooxygenase flvD. The terpene cyclase flvE catalyzes the cyclization of farnesyl pyrophosphate (FPP) to form (1R,4R,5S)-(+)-acoradiene and the cytochrome P450 monooxygenase flvD is then responsible for oxidative conversion of (1R,4R,5S)-(+)-acoradiene into the tetracyclic cage present in the final product flavunoidine. In parallel, the N-methyltransferase flvH dimethylates L-lysine to give N,N-dimethyl-L-Lysin which is decarboxylated by flvG to afford dimethylcadaverine. The terpene cyclase-like protein flvF is the enzyme that attaches the dimethylcadaverine precusor at the C-7 of the tetracyclic cage to yield pre-flavunoidine. The cytochrome monooxygenase flvC hydroxylates the C-10 position of pre-flavunoidine whereas the NRPS flvI acylates the terpenoid core at the hydroxylated C-10 with dimethylpipecolate to yield final flavunoidine. The bifunctional enzyme flvA and the dehydrogenase flvB are responsible for the synthesis of the dimethylpipecolate precursor. The PLP-dependent lyase domain of flvA might use L-O-acetyl-homoserine and alpha-keto-isovalerate to form an intermediary ketone that can cyclize intramolecularly to yield an imine. The imine can be reduced by flvB to yield the 6-carboxylated pipecolate. The C-terminal alpha-KG-dependent oxygenase domain of flvA is then proposed to catalyze the decarboxylation to yield dimethylpipecolate. In Aspergillus flavus (strain ATCC 200026 / FGSC A1120 / IAM 13836 / NRRL 3357 / JCM 12722 / SRRC 167), this protein is Nonribosomal peptide synthetase flvI.